The chain runs to 536 residues: Testis-specific protein 10-interacting protein (536 aa).

3 disordered regions span residues 1 to 94 (MLNT…LFSS), 185 to 234 (SQGL…PGQG), and 246 to 305 (MEEE…FKGP). The span at 48–64 (SGDSLQSQSCQQQRSYS) shows a compositional bias: low complexity. The span at 71–83 (KERKPRRRNKKGR) shows a compositional bias: basic residues. Residues 375–451 (QAWEQQQLKE…LQGIQHRVQA (77 aa)) adopt a coiled-coil conformation. Positions 491-536 (GNAEGIPRKHRSYRSFGVEMESSPQSPPKTEPTSSQPGRHPSPTLD) are disordered.

This is Testis-specific protein 10-interacting protein (Tsga10ip) from Rattus norvegicus (Rat).